The chain runs to 354 residues: Dye-decolorizing peroxidase (354 aa).

Residue Asp165 is the Proton acceptor of the active site. His238 contacts heme. The segment at 312–335 is targeting peptide; sequence GLFFSPTVDFLDDPPPLPAPGTPA. The segment covering 324-337 has biased composition (pro residues); sequence DPPPLPAPGTPAAP. Positions 324-354 are disordered; that stretch reads DPPPLPAPGTPAAPPARNGSLSIGSLKGTTR. A compositionally biased stretch (polar residues) spans 342 to 354; it reads GSLSIGSLKGTTR.

The protein belongs to the DyP-type peroxidase family. In terms of assembly, found in a complex with type 1 encapsulin, strongly suggesting it is found in a type 1 encapsulin nanocompartment. Homotetramer, presumably also in the type 1 encapsulin nanocompartment. It depends on heme b as a cofactor.

Its subcellular location is the encapsulin nanocompartment. The protein localises to the cell membrane. The enzyme catalyses 2 a phenolic donor + H2O2 = 2 a phenolic radical donor + 2 H2O. Functionally, cargo protein of a type 1 encapsulin nanocompartment. A heme-dependent peroxidase. This cargo-loaded encapsulin nanocompartment is probably involved in protection against oxidative damage. This Mycolicibacterium paratuberculosis (strain ATCC BAA-968 / K-10) (Mycobacterium paratuberculosis) protein is Dye-decolorizing peroxidase.